Here is a 141-residue protein sequence, read N- to C-terminus: Hemoglobin subunit alpha-3 (141 aa).

Residue Ser1 is modified to N-acetylserine. The 141-residue stretch at 1–141 (SLSASEKAAV…VSAVLTSKYR (141 aa)) folds into the Globin domain. His58 lines the O2 pocket. His87 contacts heme b.

Belongs to the globin family. As to quaternary structure, heterotetramer of two alpha chains and two beta chains. As to expression, red blood cells.

In terms of biological role, this is a tadpole (larval) alpha chain. The protein is Hemoglobin subunit alpha-3 of Aquarana catesbeiana (American bullfrog).